Consider the following 603-residue polypeptide: uncharacterized protein (603 aa).

The disordered stretch occupies residues 257–281 (AGEAASSDHDQKISRVTRKRPREPK).

This is an uncharacterized protein from Saccharomyces cerevisiae (strain ATCC 204508 / S288c) (Baker's yeast).